We begin with the raw amino-acid sequence, 351 residues long: Heat-inducible transcription repressor HrcA (351 aa).

It belongs to the HrcA family.

Negative regulator of class I heat shock genes (grpE-dnaK-dnaJ and groELS operons). Prevents heat-shock induction of these operons. In Fusobacterium nucleatum subsp. nucleatum (strain ATCC 25586 / DSM 15643 / BCRC 10681 / CIP 101130 / JCM 8532 / KCTC 2640 / LMG 13131 / VPI 4355), this protein is Heat-inducible transcription repressor HrcA.